Consider the following 325-residue polypeptide: 6-hydroxymellein 5-farnesyltransferase cdmH (325 aa).

5 helical membrane-spanning segments follow: residues 60 to 80, 113 to 133, 138 to 158, 169 to 189, and 192 to 212; these read ASIL…GAAG, AFTW…AMLG, WPFM…KRPI, LLGI…YGPC, and ISEI…WSFY. Asparagine 214 is a glycosylation site (N-linked (GlcNAc...) asparagine). The next 3 helical transmembrane spans lie at 243-263, 267-287, and 295-315; these read ALLA…LRPF, WLWL…LLSF, and GGVL…ACTL.

Belongs to the UbiA prenyltransferase family. The cofactor is Mg(2+).

The protein resides in the membrane. The catalysed reaction is 6-hydroxymellein + (2E,6E)-farnesyl diphosphate = verruculide C + diphosphate. The protein operates within secondary metabolite biosynthesis; terpenoid biosynthesis. Its function is as follows. 6-hydroxymellein 5-farnesyltransferase; part of the gene cluster that mediates the biosynthesis of chrodrimanin B, a meroterpenoid that acts as a potent blocker of insect GABA-gated chloride channels. The first step of the pathway is the biosynthesis of 6-hydroxymellein by the polyketide synthase cdmE. The prenyltransferase cdmH acts as a 6-hydroxymellein 5-farnesyltransferase and produces the hydrophobic metabolite verruculide C. The FAD-dependent monooxygenase cdmI further converts verruculide C into verruculide B. The terpene cyclase cdmG then produced the pentacyclic molecule 3-hydroxypentacecilide A, the backbone structure of chrodrimanin B, via folding the farnesyl moiety of the substrate into the chair-boat conformation. The short-chain dehydrogenase/reductase cdmF functions as the 3-OH dehydrogenase that oxidizes the C-3 hydroxyl group of 3-hydroxypentacecilide A and produces chrodrimanin C, the dehydrogenated product of 3-hydroxypentacecilide A. The cytochrome P450 monooxygenase cdmJ then accepts both 3-hydroxypentacecilide A and chrodrimanin C and functions as a C-7-beta-hydroxylase to produce respectively chrodrimanin H and chrodrimanin F. The dioxygenase cdmA accepts chrodrimanin H to afford chrodrimanin E, which is further transformed to chrodrimanin A by the dioxygenase cdmD. CdmA can also accept chrodrimanin C as substrate to convert it into verruculide A, which is further converted into chrodrimanin T by cdmD. The last step of the biosynthesis is proposed to be performed by the acetyltransferase cdmC which acetylates chrodrimanin A to yield chrodrimanin B. The pathway may also lead to the production of additional shunt products, including chrodrimanins T and U. This Talaromyces verruculosus (Penicillium verruculosum) protein is 6-hydroxymellein 5-farnesyltransferase cdmH.